The primary structure comprises 275 residues: Large ribosomal subunit protein uL2c (275 aa).

Disordered stretches follow at residues 29 to 60 (PEKSLTYGRHRSQGRNNRGIITSRHRGGGHKR) and 225 to 252 (MNPVDHPHGGGEGRAPIGRSKPVTPWGH). Basic residues predominate over residues 51-60 (SRHRGGGHKR).

Belongs to the universal ribosomal protein uL2 family. In terms of assembly, part of the 50S ribosomal subunit.

It localises to the plastid. The protein localises to the chloroplast. This is Large ribosomal subunit protein uL2c (rpl2) from Chlorokybus atmophyticus (Soil alga).